The primary structure comprises 287 residues: Elongation factor Ts (287 aa).

The interval threonine 80–leucine 83 is involved in Mg(2+) ion dislocation from EF-Tu.

The protein belongs to the EF-Ts family.

The protein localises to the cytoplasm. In terms of biological role, associates with the EF-Tu.GDP complex and induces the exchange of GDP to GTP. It remains bound to the aminoacyl-tRNA.EF-Tu.GTP complex up to the GTP hydrolysis stage on the ribosome. The sequence is that of Elongation factor Ts from Pseudomonas putida (strain ATCC 47054 / DSM 6125 / CFBP 8728 / NCIMB 11950 / KT2440).